Here is a 4568-residue protein sequence, read N- to C-terminus: Dynein heavy chain, cytoplasmic (4568 aa).

Residues 1-1826 (MDSGNESSII…VVKMANSQFF (1826 aa)) form a stem region. 5 coiled-coil regions span residues 587-652 (QTRL…VLGK), 814-844 (KLAE…NVLK), 1241-1274 (QEAL…LDLS), 1324-1340 (RKIR…LKQL), and 1559-1591 (VNMQ…RERS). AAA regions lie at residues 1827 to 2049 (YGFE…VLVS), 2118 to 2394 (QQLS…PTPQ), 2498 to 2747 (EIES…WVRG), and 2842 to 3111 (GFYE…GHRV). ATP is bound by residues 1865–1872 (GPAGTGKT), 2163–2170 (GSSGSGKT), 2537–2544 (GPPGSGKT), and 2880–2887 (GTAGAGKT). Coiled coils occupy residues 3132-3229 (EKRS…AQVE), 3339-3432 (ARAQ…RDRW), and 3707-3739 (NSVI…EVDA). Positions 3132–3432 (EKRSDLEEEK…SSLRSERDRW (301 aa)) are stalk. 2 AAA regions span residues 3496–3725 (LSTV…EVAQ) and 3954–4169 (AHRV…TLDA). Residues 4359-4386 (QLLKDIRRDLNEISAVCRAEKKQNNETR) adopt a coiled-coil conformation.

Belongs to the dynein heavy chain family. In terms of assembly, consists of at least two heavy chains and a number of intermediate and light chains.

It is found in the cytoplasm. The protein localises to the cytoskeleton. In terms of biological role, cytoplasmic dynein acts as a motor for the intracellular retrograde motility of vesicles and organelles along microtubules. Dynein has ATPase activity; the force-producing power stroke is thought to occur on release of ADP. May play a role in nuclear migration in hypodermal precursor cells. May be involved in the transport of synaptic vesicle components towards the axon of the DA motor neuron. This function may involve the regulation of dynein by pct-1 and/or cdk-5. Involved in the formation of synapses in the dorsal region during synaptic remodeling of DD motor neurons. Required for anterograde trafficking of dense-core vesicles in the DB motor neuron dendrites. Required for the formation of dendritic branches of PVD sensory neurons. May also play a role in GABAergic synaptic vesicle localization in the ventral nerve cord. May play a role in the pairing of homologous chromosomes during meiosis. The polypeptide is Dynein heavy chain, cytoplasmic (Caenorhabditis elegans).